The sequence spans 250 residues: U6 snRNA phosphodiesterase 1 (250 aa).

The interval 1 to 31 (MALVSYSSSEEDEGETSEPPGRRLPPLPPPT) is disordered. Over residues 22-31 (RRLPPLPPPT) the composition is skewed to pro residues. His-105 functions as the Proton acceptor in the catalytic mechanism. 105-107 (HIS) is a binding site for AMP. UMP contacts are provided by residues Gln-149, Tyr-187, and 191–195 (SFHVS). Residues Tyr-187 and 189–195 (EPSFHVS) contribute to the AMP site. His-193 serves as the catalytic Proton donor.

This sequence belongs to the 2H phosphoesterase superfamily. USB1 family.

It localises to the nucleus. The catalysed reaction is a 3'-end uridylyl-uridine-RNA = a 3'-end 2',3'-cyclophospho-uridine-RNA + uridine. It carries out the reaction a 3'-end uridylyl-adenosine-RNA = a 3'-end 2',3'-cyclophospho-uridine-RNA + adenosine. 3'-5' RNA exonuclease that trims the 3' end of oligo(U) and oligo(A) tracts of the pre-U6 small nuclear RNA (snRNA) molecule, leading to the formation of a mature U6 snRNA 3' end-terminated with a 2',3'-cyclic phosphate. Participates in the U6 snRNA 3' end processing that prevents U6 snRNA degradation. In addition also removes uridines from the 3' end of U6atac snRNA and possibly the vault RNA VTRNA1-1. The protein is U6 snRNA phosphodiesterase 1 of Xenopus laevis (African clawed frog).